Reading from the N-terminus, the 348-residue chain is UDP-3-O-acylglucosamine N-acyltransferase (348 aa).

H241 serves as the catalytic Proton acceptor.

The protein belongs to the transferase hexapeptide repeat family. LpxD subfamily. As to quaternary structure, homotrimer.

It carries out the reaction a UDP-3-O-[(3R)-3-hydroxyacyl]-alpha-D-glucosamine + a (3R)-hydroxyacyl-[ACP] = a UDP-2-N,3-O-bis[(3R)-3-hydroxyacyl]-alpha-D-glucosamine + holo-[ACP] + H(+). It participates in bacterial outer membrane biogenesis; LPS lipid A biosynthesis. In terms of biological role, catalyzes the N-acylation of UDP-3-O-acylglucosamine using 3-hydroxyacyl-ACP as the acyl donor. Is involved in the biosynthesis of lipid A, a phosphorylated glycolipid that anchors the lipopolysaccharide to the outer membrane of the cell. This Neisseria meningitidis serogroup C / serotype 2a (strain ATCC 700532 / DSM 15464 / FAM18) protein is UDP-3-O-acylglucosamine N-acyltransferase.